The sequence spans 362 residues: Biotin synthase (362 aa).

A disordered region spans residues 14–39; the sequence is AQRTPEPLPPTSQGLARPSHDVVRGP. Residues 87–316 enclose the Radical SAM core domain; that stretch reads HKGGPAALCG…ARDILVCGGR (230 aa). The [4Fe-4S] cluster site is built by C105, C109, and C112. [2Fe-2S] cluster-binding residues include C181 and C241.

Belongs to the radical SAM superfamily. Biotin synthase family. Homodimer. [4Fe-4S] cluster serves as cofactor. The cofactor is [2Fe-2S] cluster.

The enzyme catalyses (4R,5S)-dethiobiotin + (sulfur carrier)-SH + 2 reduced [2Fe-2S]-[ferredoxin] + 2 S-adenosyl-L-methionine = (sulfur carrier)-H + biotin + 2 5'-deoxyadenosine + 2 L-methionine + 2 oxidized [2Fe-2S]-[ferredoxin]. It participates in cofactor biosynthesis; biotin biosynthesis; biotin from 7,8-diaminononanoate: step 2/2. In terms of biological role, catalyzes the conversion of dethiobiotin (DTB) to biotin by the insertion of a sulfur atom into dethiobiotin via a radical-based mechanism. The polypeptide is Biotin synthase (Nitratidesulfovibrio vulgaris (strain ATCC 29579 / DSM 644 / CCUG 34227 / NCIMB 8303 / VKM B-1760 / Hildenborough) (Desulfovibrio vulgaris)).